The primary structure comprises 197 residues: uncharacterized protein (197 aa).

Helical transmembrane passes span 12–41, 78–100, 120–142, and 162–184; these read LCIF…WVLF, LIQG…TALS, VGVF…FGCV, and IRFA…IFRS.

It localises to the cell membrane. This is an uncharacterized protein from Treponema pallidum (strain Nichols).